We begin with the raw amino-acid sequence, 210 residues long: MDDLSPEEIQLRAHQVTDESLESTRRILGLAIESQDAGIKTITMLDEQGEQLNRIEEGMDQINKDMREAEKTLTELNKCCGLCVCPCNRTKNFESGKNYKATWGDGGDSSPSNVVSKQPSRITNGQPQQTTGAASGGYIKRITNDAREDEMEENLTQVGSILGNLKNMALDMGNEIDAQNQQIQKITEKADTNKNRIDIANTRAKKLIDS.

M1 carries the N-acetylmethionine modification. Phosphoserine is present on residues S5, S20, S23, and S34. A t-SNARE coiled-coil homology 1 domain is found at 14-76; that stretch reads HQVTDESLES…REAEKTLTEL (63 aa). A coiled-coil region spans residues 23–76; the sequence is STRRILGLAIESQDAGIKTITMLDEQGEQLNRIEEGMDQINKDMREAEKTLTEL. Residues C79, C80, C83, C85, and C87 are each lipidated (S-palmitoyl cysteine). Residues 104–136 form a disordered region; that stretch reads GDGGDSSPSNVVSKQPSRITNGQPQQTTGAASG. The segment covering 109 to 133 has biased composition (polar residues); it reads SSPSNVVSKQPSRITNGQPQQTTGA. Phosphoserine occurs at positions 110 and 160. One can recognise a t-SNARE coiled-coil homology 2 domain in the interval 145–207; that stretch reads DAREDEMEEN…DIANTRAKKL (63 aa).

Belongs to the SNAP-25 family. Homotetramer (via coiled-coil domain), also forms heterotetramers with STX4 and VAMP3. Found in a complex with VAMP8 and STX1A. Found in a complex with VAMP8 and STX4 in pancreas. Interacts simultaneously with SNAPIN and SYN4. Interacts with STX1A. Interacts with STX12. Interacts tightly to multiple syntaxins and synaptobrevins/VAMPs. Interacts with ZDHHC13 (via ANK repeats). Interacts with ZDHHC17 (via ANK repeats).

Its subcellular location is the cell membrane. It localises to the synapse. It is found in the synaptosome. The protein localises to the cytoplasmic vesicle membrane. Its function is as follows. Essential component of the high affinity receptor for the general membrane fusion machinery and an important regulator of transport vesicle docking and fusion. This Rattus norvegicus (Rat) protein is Synaptosomal-associated protein 23 (Snap23).